Reading from the N-terminus, the 334-residue chain is Holliday junction branch migration complex subunit RuvB (334 aa).

The tract at residues 4 to 186 (ADRLIAPISN…FGIVQRLEYY (183 aa)) is large ATPase domain (RuvB-L). Residues isoleucine 25, arginine 26, glycine 67, lysine 70, threonine 71, threonine 72, 133-135 (EDY), arginine 176, tyrosine 186, and arginine 223 each bind ATP. Threonine 71 serves as a coordination point for Mg(2+). A small ATPAse domain (RuvB-S) region spans residues 187 to 257 (KVADLQHIVQ…TADRALNMLD (71 aa)). The head domain (RuvB-H) stretch occupies residues 260–334 (HQGFDYMDRK…RAYLHFGIEK (75 aa)). Positions 315 and 320 each coordinate DNA.

It belongs to the RuvB family. Homohexamer. Forms an RuvA(8)-RuvB(12)-Holliday junction (HJ) complex. HJ DNA is sandwiched between 2 RuvA tetramers; dsDNA enters through RuvA and exits via RuvB. An RuvB hexamer assembles on each DNA strand where it exits the tetramer. Each RuvB hexamer is contacted by two RuvA subunits (via domain III) on 2 adjacent RuvB subunits; this complex drives branch migration. In the full resolvosome a probable DNA-RuvA(4)-RuvB(12)-RuvC(2) complex forms which resolves the HJ.

The protein localises to the cytoplasm. It carries out the reaction ATP + H2O = ADP + phosphate + H(+). Functionally, the RuvA-RuvB-RuvC complex processes Holliday junction (HJ) DNA during genetic recombination and DNA repair, while the RuvA-RuvB complex plays an important role in the rescue of blocked DNA replication forks via replication fork reversal (RFR). RuvA specifically binds to HJ cruciform DNA, conferring on it an open structure. The RuvB hexamer acts as an ATP-dependent pump, pulling dsDNA into and through the RuvAB complex. RuvB forms 2 homohexamers on either side of HJ DNA bound by 1 or 2 RuvA tetramers; 4 subunits per hexamer contact DNA at a time. Coordinated motions by a converter formed by DNA-disengaged RuvB subunits stimulates ATP hydrolysis and nucleotide exchange. Immobilization of the converter enables RuvB to convert the ATP-contained energy into a lever motion, pulling 2 nucleotides of DNA out of the RuvA tetramer per ATP hydrolyzed, thus driving DNA branch migration. The RuvB motors rotate together with the DNA substrate, which together with the progressing nucleotide cycle form the mechanistic basis for DNA recombination by continuous HJ branch migration. Branch migration allows RuvC to scan DNA until it finds its consensus sequence, where it cleaves and resolves cruciform DNA. The sequence is that of Holliday junction branch migration complex subunit RuvB from Vibrio cholerae serotype O1 (strain ATCC 39315 / El Tor Inaba N16961).